An 863-amino-acid chain; its full sequence is Bifunctional uridylyltransferase/uridylyl-removing enzyme (863 aa).

The interval 1–328 (MLFSPTLSSP…PSNQDTVIDQ (328 aa)) is uridylyltransferase. The uridylyl-removing stretch occupies residues 329-687 (LDDDFQLINQ…ISNRFSLGGT (359 aa)). Residues 446–568 (VDEHTLRVML…VQNQVRLDYL (123 aa)) enclose the HD domain. 2 ACT domains span residues 688–772 (EVFI…PNRQ) and 794–863 (QMEL…RNIG).

It belongs to the GlnD family. Requires Mg(2+) as cofactor.

It carries out the reaction [protein-PII]-L-tyrosine + UTP = [protein-PII]-uridylyl-L-tyrosine + diphosphate. The enzyme catalyses [protein-PII]-uridylyl-L-tyrosine + H2O = [protein-PII]-L-tyrosine + UMP + H(+). Its activity is regulated as follows. Uridylyltransferase (UTase) activity is inhibited by glutamine, while glutamine activates uridylyl-removing (UR) activity. Modifies, by uridylylation and deuridylylation, the PII regulatory proteins (GlnB and homologs), in response to the nitrogen status of the cell that GlnD senses through the glutamine level. Under low glutamine levels, catalyzes the conversion of the PII proteins and UTP to PII-UMP and PPi, while under higher glutamine levels, GlnD hydrolyzes PII-UMP to PII and UMP (deuridylylation). Thus, controls uridylylation state and activity of the PII proteins, and plays an important role in the regulation of nitrogen assimilation and metabolism. This chain is Bifunctional uridylyltransferase/uridylyl-removing enzyme, found in Haemophilus influenzae (strain 86-028NP).